The sequence spans 75 residues: Small ribosomal subunit protein bS18 (75 aa).

Belongs to the bacterial ribosomal protein bS18 family. In terms of assembly, part of the 30S ribosomal subunit. Forms a tight heterodimer with protein bS6.

Binds as a heterodimer with protein bS6 to the central domain of the 16S rRNA, where it helps stabilize the platform of the 30S subunit. The protein is Small ribosomal subunit protein bS18 of Photobacterium profundum (strain SS9).